A 320-amino-acid chain; its full sequence is Mitochondrial thiamine pyrophosphate carrier 1 (320 aa).

Solcar repeat units lie at residues 12–110 (GTRR…TTQA), 119–205 (PQPV…LRPS), and 213–308 (PFGS…TLRA). 6 helical membrane passes run 17-35 (VVLAGGIAGLVSRFCVAPL), 91-107 (LMYVCYGGVQFTTYRTT), 125-145 (FVAGASAGGLATAATYPLDLL), 180-197 (GCSAAVGQIVPYMGLFFA), 219-239 (ALAGMIASVLAKTGVFPLDLV), and 283-300 (GLTVSLFKAAPASAVTMW).

This sequence belongs to the mitochondrial carrier (TC 2.A.29) family.

It is found in the mitochondrion inner membrane. Its function is as follows. Mitochondrial transporter that mediates uptake of thiamine pyrophosphate (ThPP) into mitochondria. The protein is Mitochondrial thiamine pyrophosphate carrier 1 (tpc1) of Aspergillus terreus (strain NIH 2624 / FGSC A1156).